The chain runs to 157 residues: 2-C-methyl-D-erythritol 2,4-cyclodiphosphate synthase (157 aa).

The a divalent metal cation site is built by Asp8 and His10. Residues 8-10 (DVH) and 34-35 (HS) contribute to the 4-CDP-2-C-methyl-D-erythritol 2-phosphate site. His42 is a binding site for a divalent metal cation. Residues 56-58 (DIG), 61-65 (FPDTD), 100-106 (AQAPKMA), 132-135 (TTTE), Phe139, and Arg142 contribute to the 4-CDP-2-C-methyl-D-erythritol 2-phosphate site.

Belongs to the IspF family. In terms of assembly, homotrimer. The cofactor is a divalent metal cation.

It catalyses the reaction 4-CDP-2-C-methyl-D-erythritol 2-phosphate = 2-C-methyl-D-erythritol 2,4-cyclic diphosphate + CMP. The protein operates within isoprenoid biosynthesis; isopentenyl diphosphate biosynthesis via DXP pathway; isopentenyl diphosphate from 1-deoxy-D-xylulose 5-phosphate: step 4/6. Involved in the biosynthesis of isopentenyl diphosphate (IPP) and dimethylallyl diphosphate (DMAPP), two major building blocks of isoprenoid compounds. Catalyzes the conversion of 4-diphosphocytidyl-2-C-methyl-D-erythritol 2-phosphate (CDP-ME2P) to 2-C-methyl-D-erythritol 2,4-cyclodiphosphate (ME-CPP) with a corresponding release of cytidine 5-monophosphate (CMP). This chain is 2-C-methyl-D-erythritol 2,4-cyclodiphosphate synthase, found in Pseudomonas putida (strain ATCC 700007 / DSM 6899 / JCM 31910 / BCRC 17059 / LMG 24140 / F1).